An 82-amino-acid chain; its full sequence is Delta-conotoxin SVIE (82 aa).

Residues 1–22 (MKLTCVMIVAVLFLTTWTFVTA) form the signal peptide. Residues 23 to 51 (DDSRYGLKNLFPKARHEMKNPEASKLNKR) constitute a propeptide that is removed on maturation. 3 disulfide bridges follow: C54-C69, C61-C73, and C68-C77. P65 is modified (4-hydroxyproline).

It belongs to the conotoxin O1 superfamily. As to expression, expressed by the venom duct.

It is found in the secreted. Delta-conotoxins bind to site 6 of voltage-gated sodium channels (Nav) and inhibit the inactivation process. Impairs rapid channel inactivation of Nav1.4/SCN4A (Kd=500 nM). Interacts with a conserved hydrophobic triad (YFV) in the domain-4 voltage sensor of sodium channels. In vivo, injection of both native or synthetic peptide induces twitching of back limbs, running in circles, and spastic paralysis. This is Delta-conotoxin SVIE (SO6) from Conus striatus (Striated cone).